A 594-amino-acid polypeptide reads, in one-letter code: Zinc finger protein 37 (594 aa).

Residues 1–253 (MATSEPAESD…KPEKAPGSGK (253 aa)) form a disordered region. The residue at position 3 (Thr-3) is a Phosphothreonine. Residues 3-74 (TSEPAESDAV…GKKASPSSLK (72 aa)) enclose the KRAB domain. The residue at position 9 (Ser-9) is a Phosphoserine. The span at 10-33 (DAVRAKEWEQLEPVQRDVYKDTKL) shows a compositional bias: basic and acidic residues. Polar residues predominate over residues 34–46 (ENCSNPASMGNQD). Positions 89–111 (QQDDEHREEKQKSQSKLTKEVTL) are enriched in basic and acidic residues. The segment covering 145-158 (KSSSRGKNSNQNSD) has biased composition (polar residues). 2 stretches are compositionally biased toward basic and acidic residues: residues 159–172 (SLKK…DHRK) and 181–234 (VNKD…TGEK). C2H2-type zinc fingers lie at residues 255 to 277 (YECN…QRTH), 283 to 305 (YECN…QRTH), 311 to 324 (YECE…GHKH), 339 to 361 (YKCN…LRSH), 367 to 389 (YECK…VRTH), 395 to 417 (YECN…MRIH), 423 to 445 (FECN…QRTH), 451 to 473 (YKCD…MRTH), 479 to 501 (FECN…QRVH), 507 to 529 (YECV…QRTH), 535 to 557 (FECY…QRSH), and 563 to 585 (YECI…MKIH).

It belongs to the krueppel C2H2-type zinc-finger protein family. In terms of tissue distribution, expressed in testis and brain.

It localises to the nucleus. Its function is as follows. May have a role in regulating spermiogenesis. In Mus musculus (Mouse), this protein is Zinc finger protein 37 (Zfp37).